A 319-amino-acid chain; its full sequence is Alpha-hemolysin (319 aa).

The N-terminal stretch at 1 to 26 (MKTRIVSSVTTTLLLGSILMNPVANA) is a signal peptide.

Belongs to the aerolysin family. As to quaternary structure, self-assembles to form first a non-lytic oligomeric intermediate and then, a mushroom-shaped homoheptamer structure of 100 Angstroms in length and up to 100 Angstroms in diameter.

It localises to the secreted. Functionally, alpha-toxin binds to the membrane of eukaryotic cells resulting in the release of low-molecular weight molecules and leading to an eventual osmotic lysis. Inhibits host neutrophil chemotaxis to the lesion region. Heptamer oligomerization and pore formation is required for lytic activity. The protein is Alpha-hemolysin (hly) of Staphylococcus aureus (strain NCTC 8325 / PS 47).